Here is a 620-residue protein sequence, read N- to C-terminus: 1-deoxy-D-xylulose-5-phosphate synthase (620 aa).

Thiamine diphosphate is bound by residues H80 and 121–123; that span reads GHS. Mg(2+) is bound at residue D152. Thiamine diphosphate is bound by residues 153 to 154, N181, Y288, and E370; that span reads GA. Mg(2+) is bound at residue N181.

Belongs to the transketolase family. DXPS subfamily. In terms of assembly, homodimer. It depends on Mg(2+) as a cofactor. Thiamine diphosphate is required as a cofactor.

It carries out the reaction D-glyceraldehyde 3-phosphate + pyruvate + H(+) = 1-deoxy-D-xylulose 5-phosphate + CO2. The protein operates within metabolic intermediate biosynthesis; 1-deoxy-D-xylulose 5-phosphate biosynthesis; 1-deoxy-D-xylulose 5-phosphate from D-glyceraldehyde 3-phosphate and pyruvate: step 1/1. Its function is as follows. Catalyzes the acyloin condensation reaction between C atoms 2 and 3 of pyruvate and glyceraldehyde 3-phosphate to yield 1-deoxy-D-xylulose-5-phosphate (DXP). This Shigella boydii serotype 18 (strain CDC 3083-94 / BS512) protein is 1-deoxy-D-xylulose-5-phosphate synthase.